The chain runs to 420 residues: Glutamyl-tRNA reductase (420 aa).

Substrate contacts are provided by residues 49–52 (TCNR), serine 109, 114–116 (EPQ), and glutamine 120. Cysteine 50 acts as the Nucleophile in catalysis. An NADP(+)-binding site is contributed by 189–194 (GAGETI).

It belongs to the glutamyl-tRNA reductase family. In terms of assembly, homodimer.

It carries out the reaction (S)-4-amino-5-oxopentanoate + tRNA(Glu) + NADP(+) = L-glutamyl-tRNA(Glu) + NADPH + H(+). It participates in porphyrin-containing compound metabolism; protoporphyrin-IX biosynthesis; 5-aminolevulinate from L-glutamyl-tRNA(Glu): step 1/2. In terms of biological role, catalyzes the NADPH-dependent reduction of glutamyl-tRNA(Glu) to glutamate 1-semialdehyde (GSA). The chain is Glutamyl-tRNA reductase from Yersinia pseudotuberculosis serotype O:1b (strain IP 31758).